Here is a 620-residue protein sequence, read N- to C-terminus: Probable translation initiation factor IF-2 (620 aa).

Acidic residues predominate over residues 1–10 (MSDTDADADT). The segment at 1–29 (MSDTDADADTDAVSTTETSMNADANANAD) is disordered. The segment covering 11-29 (DAVSTTETSMNADANANAD) has biased composition (low complexity). The region spanning 33–248 (LRTPIVAVLG…VLMGLSQRYM (216 aa)) is the tr-type G domain. The interval 42-49 (GHVDHGKT) is G1. 42-49 (GHVDHGKT) lines the GTP pocket. The tract at residues 67 to 71 (AITQH) is G2. The tract at residues 104–107 (DTPG) is G3. Residues 104–108 (DTPGH) and 158–161 (NKVD) each bind GTP. The G4 stretch occupies residues 158–161 (NKVD). Residues 162–183 (TTPGWTPTDGSPIQPTYESQPS) are compositionally biased toward polar residues. The disordered stretch occupies residues 162-185 (TTPGWTPTDGSPIQPTYESQPSAA). Residues 226–228 (SAI) form a G5 region.

This sequence belongs to the TRAFAC class translation factor GTPase superfamily. Classic translation factor GTPase family. IF-2 subfamily.

Its function is as follows. Function in general translation initiation by promoting the binding of the formylmethionine-tRNA to ribosomes. Seems to function along with eIF-2. In Haloquadratum walsbyi (strain DSM 16790 / HBSQ001), this protein is Probable translation initiation factor IF-2.